A 192-amino-acid chain; its full sequence is Type-4 uracil-DNA glycosylase (192 aa).

[4Fe-4S] cluster is bound by residues cysteine 18 and cysteine 21. Residues 45–47 (GEG), phenylalanine 59, and asparagine 85 contribute to the uracil site. The [4Fe-4S] cluster site is built by cysteine 89 and cysteine 105. A uracil-binding site is contributed by histidine 161.

Belongs to the uracil-DNA glycosylase (UDG) superfamily. Type 4 (UDGa) family.

It catalyses the reaction Hydrolyzes single-stranded DNA or mismatched double-stranded DNA and polynucleotides, releasing free uracil.. Its function is as follows. Removes uracil bases that are present in DNA as a result of either deamination of cytosine or misincorporation of dUMP instead of dTMP. Can remove uracil from double-stranded DNA containing either a U/G or U/A base pair as well as from single-stranded DNA. The sequence is that of Type-4 uracil-DNA glycosylase from Thermotoga maritima (strain ATCC 43589 / DSM 3109 / JCM 10099 / NBRC 100826 / MSB8).